The primary structure comprises 279 residues: 3-methyl-2-oxobutanoate hydroxymethyltransferase (279 aa).

2 residues coordinate Mg(2+): Asp43 and Asp82. Residues 43-44 (DS), Asp82, and Lys112 contribute to the 3-methyl-2-oxobutanoate site. Glu114 contacts Mg(2+). Residue Glu181 is the Proton acceptor of the active site.

Belongs to the PanB family. Homodecamer; pentamer of dimers. The cofactor is Mg(2+).

Its subcellular location is the cytoplasm. It catalyses the reaction 3-methyl-2-oxobutanoate + (6R)-5,10-methylene-5,6,7,8-tetrahydrofolate + H2O = 2-dehydropantoate + (6S)-5,6,7,8-tetrahydrofolate. It functions in the pathway cofactor biosynthesis; (R)-pantothenate biosynthesis; (R)-pantoate from 3-methyl-2-oxobutanoate: step 1/2. Its function is as follows. Catalyzes the reversible reaction in which hydroxymethyl group from 5,10-methylenetetrahydrofolate is transferred onto alpha-ketoisovalerate to form ketopantoate. This Lysinibacillus sphaericus (strain C3-41) protein is 3-methyl-2-oxobutanoate hydroxymethyltransferase.